Consider the following 352-residue polypeptide: Inorganic triphosphatase (352 aa).

The 198-residue stretch at 6 to 203 folds into the CYTH domain; it reads LQEIELKLAI…KRGYLLGSKQ (198 aa).

It catalyses the reaction triphosphate + H2O = phosphate + diphosphate. In terms of biological role, involved in the hydrolysis of the beta-gamma-phosphoanhydride linkage of triphosphate-containing substrates (inorganic or nucleoside-linked). Catalyzes the hydrolysis of inorganic triphosphate (PPPi), which could be cytotoxic because of its high affinity for calcium ion, thereby interfering with calcium signaling. This Haemophilus influenzae (strain ATCC 51907 / DSM 11121 / KW20 / Rd) protein is Inorganic triphosphatase.